Here is a 341-residue protein sequence, read N- to C-terminus: MEPAFGEVNQLGGVFVNGRPLPNAIRLRIVELAQLGIRPCDISRQLRVSHGCVSKILARYNETGSILPGAIGGSKPRVTTPTVVKHIRTYKQRDPGIFAWEIRDRLLADGVCDKYNVPSVSSISRILRNKIGNLAQQGHYDSYKQHQPTPQPALPYNHIYSYPSPITAAAAKVPTPPGVPAIPGSVAMPRTWPSSHSVTDILGIRSITDQVSDSSPYHSPKVEEWSSLGRNNFPAAAPHAVNGLEKGALEQEAKYGQAPNGLPAVGSFVSASSMAPYPTPAQVSPYMTYSAAPSGYVAGHGWQHAGGTSLSPHNCDIPASLAFKGMQAAREGSHSVTASAL.

A DNA-binding region (paired) is located at residues 4-130; sequence AFGEVNQLGG…SSISRILRNK (127 aa). The segment at 7 to 63 is PAI subdomain; the sequence is EVNQLGGVFVNGRPLPNAIRLRIVELAQLGIRPCDISRQLRVSHGCVSKILARYNET. The interval 82–130 is RED subdomain; the sequence is TVVKHIRTYKQRDPGIFAWEIRDRLLADGVCDKYNVPSVSSISRILRNK. Residues 168–189 form an interaction with KDM5B region; the sequence is AAAAKVPTPPGVPAIPGSVAMP.

Interacts with KDM5B.

It is found in the nucleus. Its function is as follows. Transcription factor required for normal development of thymus, parathyroid glands, ultimobranchial bodies, teeth, skeletal elements of skull and larynx as well as distal limbs. In Homo sapiens (Human), this protein is Paired box protein Pax-9 (PAX9).